The primary structure comprises 236 residues: 7-cyano-7-deazaguanine synthase (236 aa).

Residue 7 to 17 (CSGGLDSVSLA) participates in ATP binding. Zn(2+)-binding residues include Cys185, Cys193, Cys196, and Cys199.

It belongs to the QueC family. Zn(2+) is required as a cofactor.

The catalysed reaction is 7-carboxy-7-deazaguanine + NH4(+) + ATP = 7-cyano-7-deazaguanine + ADP + phosphate + H2O + H(+). The protein operates within purine metabolism; 7-cyano-7-deazaguanine biosynthesis. Its function is as follows. Catalyzes the ATP-dependent conversion of 7-carboxy-7-deazaguanine (CDG) to 7-cyano-7-deazaguanine (preQ(0)). In Agrobacterium fabrum (strain C58 / ATCC 33970) (Agrobacterium tumefaciens (strain C58)), this protein is 7-cyano-7-deazaguanine synthase.